Reading from the N-terminus, the 260-residue chain is Trans-aconitate 2-methyltransferase (260 aa).

The protein belongs to the methyltransferase superfamily. Tam family.

The protein localises to the cytoplasm. The enzyme catalyses trans-aconitate + S-adenosyl-L-methionine = (E)-3-(methoxycarbonyl)pent-2-enedioate + S-adenosyl-L-homocysteine. Catalyzes the S-adenosylmethionine monomethyl esterification of trans-aconitate. This Paracidovorax citrulli (strain AAC00-1) (Acidovorax citrulli) protein is Trans-aconitate 2-methyltransferase.